Consider the following 280-residue polypeptide: Shikimate kinase (280 aa).

Residue 86–96 (PPGVGLKGSAA) coordinates ATP.

This sequence belongs to the GHMP kinase family. Archaeal shikimate kinase subfamily.

Its subcellular location is the cytoplasm. It carries out the reaction shikimate + ATP = 3-phosphoshikimate + ADP + H(+). It functions in the pathway metabolic intermediate biosynthesis; chorismate biosynthesis; chorismate from D-erythrose 4-phosphate and phosphoenolpyruvate: step 5/7. The sequence is that of Shikimate kinase (aroK) from Aeropyrum pernix (strain ATCC 700893 / DSM 11879 / JCM 9820 / NBRC 100138 / K1).